A 256-amino-acid polypeptide reads, in one-letter code: MGTDLWVGTWRPHRPRGPIAAFYSSPGPKYSLPGNTGFVSHDPSRHRAPAYSMGNRRFKLVDDCSPGPGYLVPSNITVKGKDGTPAYSIYGRPRDISSFRTPGPGSYSPERAGKSAYRSAPTYSLGERTKTFGNDQTPGPAAYMLPSVIGPRIVNRSSAPNYSMTGRSKIGSFHEDLQKTPGPGTYRVIDPGTYKHKPPQYSMTARNVLPGDTTIKPGPGAYSPEKVVMSKAQAPNFSFGIRHSEYVAPLIVDVAD.

STPGR repeat units follow at residues 66 to 92, 181 to 206, and 217 to 242; these read PGPGYLVPSNITVKGKDGTPAYSIYGR, PGPGTYRVIDPGTYKHKPPQYSMTAR, and PGPGAYSPEKVVMSKAQAPNFSFGIR. Residues 91 to 115 are disordered; sequence GRPRDISSFRTPGPGSYSPERAGKS.

It belongs to the CIMAP family.

The protein resides in the cytoplasm. It localises to the cytoskeleton. It is found in the flagellum axoneme. In terms of biological role, outer dense fibers are filamentous structures located on the outside of the axoneme in the midpiece and principal piece of the mammalian sperm tail. May help to maintain the passive elastic structures and elastic recoil of the sperm tail. In Xenopus laevis (African clawed frog), this protein is Ciliary microtubule associated protein 1A (cimap1a).